The sequence spans 170 residues: Lipoprotein signal peptidase (170 aa).

The next 3 helical transmembrane spans lie at tryptophan 12–alanine 32, tryptophan 67–leucine 87, and serine 93–isoleucine 113. Active-site residues include aspartate 123 and aspartate 141. A helical transmembrane segment spans residues phenylalanine 137 to phenylalanine 157.

This sequence belongs to the peptidase A8 family.

The protein resides in the cell inner membrane. It catalyses the reaction Release of signal peptides from bacterial membrane prolipoproteins. Hydrolyzes -Xaa-Yaa-Zaa-|-(S,diacylglyceryl)Cys-, in which Xaa is hydrophobic (preferably Leu), and Yaa (Ala or Ser) and Zaa (Gly or Ala) have small, neutral side chains.. Its pathway is protein modification; lipoprotein biosynthesis (signal peptide cleavage). In terms of biological role, this protein specifically catalyzes the removal of signal peptides from prolipoproteins. This chain is Lipoprotein signal peptidase, found in Shewanella sp. (strain MR-4).